A 277-amino-acid polypeptide reads, in one-letter code: Diaminopimelate epimerase (277 aa).

Residues N13, Q46, and N66 each contribute to the substrate site. C75 (proton donor) is an active-site residue. Substrate contacts are provided by residues 76–77, N160, N193, and 211–212; these read GN and ER. Residue C220 is the Proton acceptor of the active site. 221–222 contributes to the substrate binding site; that stretch reads GS.

This sequence belongs to the diaminopimelate epimerase family. In terms of assembly, homodimer.

Its subcellular location is the cytoplasm. The enzyme catalyses (2S,6S)-2,6-diaminopimelate = meso-2,6-diaminopimelate. It participates in amino-acid biosynthesis; L-lysine biosynthesis via DAP pathway; DL-2,6-diaminopimelate from LL-2,6-diaminopimelate: step 1/1. Its function is as follows. Catalyzes the stereoinversion of LL-2,6-diaminopimelate (L,L-DAP) to meso-diaminopimelate (meso-DAP), a precursor of L-lysine and an essential component of the bacterial peptidoglycan. This is Diaminopimelate epimerase from Legionella pneumophila (strain Lens).